The primary structure comprises 413 residues: Multifunctional CCA protein (413 aa).

2 residues coordinate ATP: Gly-8 and Arg-11. Residues Gly-8 and Arg-11 each coordinate CTP. Residues Asp-21 and Asp-23 each coordinate Mg(2+). Residues Arg-91, Arg-143, and Arg-146 each contribute to the ATP site. Residues Arg-91, Arg-143, and Arg-146 each contribute to the CTP site. The HD domain maps to 232-333 (TGVHVMMVVD…VRFFERSDAL (102 aa)).

This sequence belongs to the tRNA nucleotidyltransferase/poly(A) polymerase family. Bacterial CCA-adding enzyme type 1 subfamily. In terms of assembly, monomer. Can also form homodimers and oligomers. It depends on Mg(2+) as a cofactor. Ni(2+) is required as a cofactor.

The enzyme catalyses a tRNA precursor + 2 CTP + ATP = a tRNA with a 3' CCA end + 3 diphosphate. The catalysed reaction is a tRNA with a 3' CCA end + 2 CTP + ATP = a tRNA with a 3' CCACCA end + 3 diphosphate. Functionally, catalyzes the addition and repair of the essential 3'-terminal CCA sequence in tRNAs without using a nucleic acid template. Adds these three nucleotides in the order of C, C, and A to the tRNA nucleotide-73, using CTP and ATP as substrates and producing inorganic pyrophosphate. tRNA 3'-terminal CCA addition is required both for tRNA processing and repair. Also involved in tRNA surveillance by mediating tandem CCA addition to generate a CCACCA at the 3' terminus of unstable tRNAs. While stable tRNAs receive only 3'-terminal CCA, unstable tRNAs are marked with CCACCA and rapidly degraded. The chain is Multifunctional CCA protein from Burkholderia ambifaria (strain MC40-6).